The chain runs to 166 residues: Heme-degrading monooxygenase HmoB (166 aa).

Fe cation is bound at residue Asn33. In terms of domain architecture, ABM spans 66–153 (FAVLNNIAVT…SAGIDTTSIF (88 aa)). Residue His138 participates in heme binding.

Belongs to the antibiotic biosynthesis monooxygenase family. In terms of assembly, homodimer.

The protein resides in the cytoplasm. It catalyses the reaction heme b + 3 reduced [NADPH--hemoprotein reductase] + 3 O2 = biliverdin IXalpha + CO + Fe(2+) + 3 oxidized [NADPH--hemoprotein reductase] + 3 H2O + H(+). Catalyzes the oxidative degradation of the heme macrocyclic porphyrin ring in the presence of a suitable electron donor such as ascorbate or NADPH--cytochrome P450 reductase, with subsequent release of free iron. This Bacillus subtilis (strain 168) protein is Heme-degrading monooxygenase HmoB (hmoB).